Here is a 50-residue protein sequence, read N- to C-terminus: Defensin-like protein 1 (50 aa).

4 cysteine pairs are disulfide-bonded: C2/C50, C14/C35, C20/C44, and C24/C46.

This sequence belongs to the DEFL family.

Its subcellular location is the secreted. Its function is as follows. Possesses antimicrobial activity sensitive to inorganic cations. Binds specifically to the fungal plasma membrane. Has no inhibitory effect on insect gut alpha-amylase. This chain is Defensin-like protein 1, found in Aesculus hippocastanum (Horse chestnut).